The following is a 305-amino-acid chain: Ornithine carbamoyltransferase (305 aa).

Residues 47–50 (STRT), arginine 98, and 125–128 (HPCQ) contribute to the carbamoyl phosphate site. Residues asparagine 156, aspartate 221, and 225 to 226 (SM) contribute to the L-ornithine site. Residues 262–263 (CL) and arginine 290 contribute to the carbamoyl phosphate site.

This sequence belongs to the aspartate/ornithine carbamoyltransferase superfamily. OTCase family.

It localises to the cytoplasm. It catalyses the reaction carbamoyl phosphate + L-ornithine = L-citrulline + phosphate + H(+). It functions in the pathway amino-acid biosynthesis; L-arginine biosynthesis; L-arginine from L-ornithine and carbamoyl phosphate: step 1/3. Functionally, reversibly catalyzes the transfer of the carbamoyl group from carbamoyl phosphate (CP) to the N(epsilon) atom of ornithine (ORN) to produce L-citrulline. This is Ornithine carbamoyltransferase from Methanococcus vannielii (strain ATCC 35089 / DSM 1224 / JCM 13029 / OCM 148 / SB).